The chain runs to 736 residues: Subtilisin-like protease SBT4.6 (736 aa).

The first 24 residues, 1 to 24 (MATAVSYCLLSCIFALLVVSFASA), serve as a signal peptide directing secretion. Positions 25–111 (GKDDQDKQVY…VFPSKNLNLQ (87 aa)) are cleaved as a propeptide — activation peptide. The Inhibitor I9 domain maps to 33 to 110 (VYIVYMGALP…SVFPSKNLNL (78 aa)). One can recognise a Peptidase S8 domain in the interval 115-589 (SWNFMGLKEG…AGHVDPIAAI (475 aa)). Asp143 acts as the Charge relay system in catalysis. Residue Asn174 is glycosylated (N-linked (GlcNAc...) asparagine). The active-site Charge relay system is His204. Residue Asn227 is glycosylated (N-linked (GlcNAc...) asparagine). Positions 362–442 (KYPLVYGKSA…PVSVLSEDDY (81 aa)) constitute a PA domain. N-linked (GlcNAc...) asparagine glycosylation is present at Asn450. The Charge relay system role is filled by Ser527. N-linked (GlcNAc...) asparagine glycosylation is found at Asn564, Asn598, Asn610, and Asn668.

The protein belongs to the peptidase S8 family. The C-terminal propeptide is autocleaved.

It localises to the secreted. In Arabidopsis thaliana (Mouse-ear cress), this protein is Subtilisin-like protease SBT4.6.